A 626-amino-acid chain; its full sequence is ATP-dependent rRNA helicase spb4 (626 aa).

The Q motif signature appears at 14–42; it reads WDALTPSLAEWVLDAISSMGFEKMTPVQA. In terms of domain architecture, Helicase ATP-binding spans 45–246; it reads IPLFMGNKDV…RVGLRNPVKI (202 aa). An ATP-binding site is contributed by 58 to 65; it reads AVTGSGKT. Residues 194–197 carry the DEAD box motif; it reads DEAD. The Helicase C-terminal domain maps to 279-437; that stretch reads ALLSLLSQLE…TTGEAAKILI (159 aa). The interval 553 to 599 is disordered; the sequence is QREAWSQKHEKQDLKELKREKKKRKREIERLEKMTDEEKKEEQAKEK. Composition is skewed to basic and acidic residues over residues 554–571 and 578–599; these read REAW…ELKR and REIE…AKEK. A coiled-coil region spans residues 558 to 620; sequence SQKHEKQDLK…RKIEDDADVE (63 aa).

The protein belongs to the DEAD box helicase family. DDX55/SPB4 subfamily. In terms of assembly, component of pre-60S ribosomal complexes.

The protein resides in the nucleus. It is found in the nucleolus. It carries out the reaction ATP + H2O = ADP + phosphate + H(+). In terms of biological role, ATP-binding RNA helicase involved in the biogenesis of 60S ribosomal subunits. Binds 90S pre-ribosomal particles and dissociates from pre-60S ribosomal particles after processing of 27SB pre-rRNA. Required for the normal formation of 18S rRNA through the processing of pre-rRNAs at sites A0, A1 and A2, and the normal formation of 25S and 5.8S rRNAs through the processing of pre-rRNAs at sites C1 and C2. This Botryotinia fuckeliana (strain B05.10) (Noble rot fungus) protein is ATP-dependent rRNA helicase spb4.